We begin with the raw amino-acid sequence, 166 residues long: NAD(P)H-quinone oxidoreductase subunit I, chloroplastic (166 aa).

2 consecutive 4Fe-4S ferredoxin-type domains span residues 55–84 (GRIH…VDWK) and 95–124 (LNYS…MTEE). Positions 64, 67, 70, 74, 104, 107, 110, and 114 each coordinate [4Fe-4S] cluster.

This sequence belongs to the complex I 23 kDa subunit family. In terms of assembly, NDH is composed of at least 16 different subunits, 5 of which are encoded in the nucleus. [4Fe-4S] cluster serves as cofactor.

The protein resides in the plastid. It is found in the chloroplast thylakoid membrane. It catalyses the reaction a plastoquinone + NADH + (n+1) H(+)(in) = a plastoquinol + NAD(+) + n H(+)(out). The enzyme catalyses a plastoquinone + NADPH + (n+1) H(+)(in) = a plastoquinol + NADP(+) + n H(+)(out). Functionally, NDH shuttles electrons from NAD(P)H:plastoquinone, via FMN and iron-sulfur (Fe-S) centers, to quinones in the photosynthetic chain and possibly in a chloroplast respiratory chain. The immediate electron acceptor for the enzyme in this species is believed to be plastoquinone. Couples the redox reaction to proton translocation, and thus conserves the redox energy in a proton gradient. This Silphium perfoliatum (Cup plant) protein is NAD(P)H-quinone oxidoreductase subunit I, chloroplastic.